We begin with the raw amino-acid sequence, 426 residues long: Histidine--tRNA ligase (426 aa).

This sequence belongs to the class-II aminoacyl-tRNA synthetase family. Homodimer.

The protein resides in the cytoplasm. The catalysed reaction is tRNA(His) + L-histidine + ATP = L-histidyl-tRNA(His) + AMP + diphosphate + H(+). The chain is Histidine--tRNA ligase from Streptococcus pyogenes serotype M18 (strain MGAS8232).